Here is a 285-residue protein sequence, read N- to C-terminus: Nucleotide-binding protein NTHI1314 (285 aa).

8-15 lines the ATP pocket; that stretch reads GRSGAGKS. 56–59 contacts GTP; it reads DIRN.

It belongs to the RapZ-like family.

Displays ATPase and GTPase activities. This Haemophilus influenzae (strain 86-028NP) protein is Nucleotide-binding protein NTHI1314.